Consider the following 158-residue polypeptide: Large ribosomal subunit protein uL30 (158 aa).

Belongs to the universal ribosomal protein uL30 family. As to quaternary structure, part of the 50S ribosomal subunit.

In Sulfurisphaera tokodaii (strain DSM 16993 / JCM 10545 / NBRC 100140 / 7) (Sulfolobus tokodaii), this protein is Large ribosomal subunit protein uL30.